Consider the following 301-residue polypeptide: MTQLKLPDIAAQTQAYAVPLNWVGMCGIALPVQFEGRTAAAKVDAGVSLVDGSSRGIHMSRLYLALGSLEHQPLTPLAIRQLLEDFLSSHASLSSAAYLRFSFEHLLNRPALISPLAGWKSYAVTVDTRIENEVFHVELSVSVPYSSTCPCSAALARQLIQQQFQTHFSEQKIEKAAVLQWLGSAEGIVATPHSQRSTAQVQVRLNSNQQVLPITELIDRIEASLGTAVQTAVKRADEQAFALANGQNLMFCEDAARRLHQALRQIEWSKAFKLRVEHAESLHAHDAVATSQWQWDVSCAV.

This sequence belongs to the GTP cyclohydrolase IV family.

The enzyme catalyses GTP + H2O = 7,8-dihydroneopterin 3'-triphosphate + formate + H(+). The protein operates within cofactor biosynthesis; 7,8-dihydroneopterin triphosphate biosynthesis; 7,8-dihydroneopterin triphosphate from GTP: step 1/1. Functionally, converts GTP to 7,8-dihydroneopterin triphosphate. The chain is GTP cyclohydrolase FolE2 from Pseudomonas putida (strain GB-1).